The following is a 311-amino-acid chain: Protoheme IX farnesyltransferase 1 (311 aa).

Helical transmembrane passes span 31–51 (VMAL…GAVN), 52–72 (PVIA…AGAL), 97–117 (VTPG…VMTL), 119–139 (VLVG…YIVI), 152–172 (IVIG…AATG), 179–199 (LVLF…LALF), 225–245 (ILAY…FGFT), 247–267 (GYYG…SWKV), and 281–301 (LFAY…ADTI).

The protein belongs to the UbiA prenyltransferase family. Protoheme IX farnesyltransferase subfamily.

The protein resides in the cell inner membrane. It catalyses the reaction heme b + (2E,6E)-farnesyl diphosphate + H2O = Fe(II)-heme o + diphosphate. Its pathway is porphyrin-containing compound metabolism; heme O biosynthesis; heme O from protoheme: step 1/1. Converts heme B (protoheme IX) to heme O by substitution of the vinyl group on carbon 2 of heme B porphyrin ring with a hydroxyethyl farnesyl side group. This chain is Protoheme IX farnesyltransferase 1, found in Mesorhizobium japonicum (strain LMG 29417 / CECT 9101 / MAFF 303099) (Mesorhizobium loti (strain MAFF 303099)).